Consider the following 401-residue polypeptide: L-methionine gamma-lyase (401 aa).

Residues 59 to 61 (YTR) and 89 to 90 (GI) each bind pyridoxal 5'-phosphate. Tyr-114 contributes to the substrate binding site. Position 210–212 (210–212 (SAT)) interacts with pyridoxal 5'-phosphate. Residue Lys-213 is modified to N6-(pyridoxal phosphate)lysine. Substrate is bound at residue Arg-377.

Belongs to the trans-sulfuration enzymes family. L-methionine gamma-lyase subfamily. In terms of assembly, homotetramer; dimer of active dimers. Pyridoxal 5'-phosphate serves as cofactor.

The enzyme catalyses L-methionine + H2O = methanethiol + 2-oxobutanoate + NH4(+). It catalyses the reaction L-homocysteine + H2O = 2-oxobutanoate + hydrogen sulfide + NH4(+) + H(+). In terms of biological role, catalyzes the alpha,gamma-elimination of L-methionine to produce methanethiol, 2-oxobutanoate and ammonia; methanethiol (methyl mercaptan) is considered to be one of the main causes of the oral malodor associated with periodontitis and may also play a role in the pathogenicity of T.denticola. Also displays homocysteine desulfhydrase activity, degrading homocysteine to produce hydrogen sulfide, 2-oxobutanoate and ammonia. This Treponema denticola (strain ATCC 35405 / DSM 14222 / CIP 103919 / JCM 8153 / KCTC 15104) protein is L-methionine gamma-lyase.